Reading from the N-terminus, the 231-residue chain is Large ribosomal subunit protein uL1 (231 aa).

The protein belongs to the universal ribosomal protein uL1 family. As to quaternary structure, part of the 50S ribosomal subunit.

Functionally, binds directly to 23S rRNA. The L1 stalk is quite mobile in the ribosome, and is involved in E site tRNA release. Its function is as follows. Protein L1 is also a translational repressor protein, it controls the translation of the L11 operon by binding to its mRNA. This chain is Large ribosomal subunit protein uL1, found in Acinetobacter baumannii (strain AB307-0294).